The following is a 98-amino-acid chain: DNA-binding protein Fis (98 aa).

A DNA-binding region (H-T-H motif) is located at residues 74-93; sequence QTRAATMMGINRGTLRKKLK.

Belongs to the transcriptional regulatory Fis family. As to quaternary structure, homodimer.

In terms of biological role, activates ribosomal RNA transcription. Plays a direct role in upstream activation of rRNA promoters. The chain is DNA-binding protein Fis from Photobacterium profundum (strain SS9).